The primary structure comprises 2457 residues: Large tegument protein deneddylase (2457 aa).

A deubiquitination activity region spans residues M1–L234. In terms of domain architecture, Peptidase C76 spans E13–F224. Catalysis depends on residues C33, D163, and H165. Disordered stretches follow at residues E281–V350, I2064–P2131, G2164–Q2360, and G2387–H2407. Residues S293–T302 are compositionally biased toward basic and acidic residues. The segment covering T314–G334 has biased composition (acidic residues). Residues T2080–Q2091 are compositionally biased toward basic and acidic residues. Residues S2115–P2131 show a composition bias toward pro residues. Residues H2173–R2186 show a composition bias toward polar residues. The span at G2387 to V2398 shows a compositional bias: basic and acidic residues.

It belongs to the herpesviridae large tegument protein family. In terms of assembly, interacts with host CUL1 and CUL4A; these interactions inhibit the E3 ligase activity of cullins. Interacts with inner tegument protein. Interacts with capsid vertex specific component CVC2. Interacts with the major capsid protein/MCP.

Its subcellular location is the virion tegument. The protein localises to the host cytoplasm. It localises to the host nucleus. The catalysed reaction is Thiol-dependent hydrolysis of ester, thioester, amide, peptide and isopeptide bonds formed by the C-terminal Gly of ubiquitin (a 76-residue protein attached to proteins as an intracellular targeting signal).. In terms of biological role, large tegument protein that plays multiple roles in the viral cycle. During viral entry, remains associated with the capsid while most of the tegument is detached and participates in the capsid transport toward the host nucleus. Plays a role in the routing of the capsid at the nuclear pore complex and subsequent uncoating. Within the host nucleus, acts as a deneddylase and promotes the degradation of nuclear CRLs (cullin-RING ubiquitin ligases) and thereby stabilizes nuclear CRL substrates, while cytoplasmic CRLs remain unaffected. These modifications prevent host cell cycle S-phase progression and create a favorable environment allowing efficient viral genome replication. Participates later in the secondary envelopment of capsids. Indeed, plays a linker role for the association of the outer viral tegument to the capsids together with the inner tegument protein. This chain is Large tegument protein deneddylase, found in Apodemus sylvaticus (European woodmouse).